Reading from the N-terminus, the 443-residue chain is C4-dicarboxylate transport protein (443 aa).

The next 9 membrane-spanning stretches (helical) occupy residues serine 10–proline 30, leucine 46–methionine 66, tyrosine 78–valine 98, isoleucine 143–glycine 163, proline 199–valine 219, leucine 224–cysteine 244, valine 291–leucine 311, isoleucine 332–glycine 352, and isoleucine 354–isoleucine 374.

Belongs to the dicarboxylate/amino acid:cation symporter (DAACS) (TC 2.A.23) family.

The protein resides in the cell inner membrane. Responsible for the transport of dicarboxylates such as succinate, fumarate, and malate from the periplasm across the membrane. The sequence is that of C4-dicarboxylate transport protein from Pseudomonas fluorescens (strain SBW25).